The chain runs to 65 residues: Large ribosomal subunit protein bL35 (65 aa).

A compositionally biased stretch (basic residues) spans 1–15 (MPKMKTKKSASKRFT). Disordered stretches follow at residues 1 to 26 (MPKM…KRGQ) and 38 to 65 (TKNK…MPYA). Basic and acidic residues predominate over residues 45–54 (RGTEGVHETN).

It belongs to the bacterial ribosomal protein bL35 family.

This Ralstonia pickettii (strain 12J) protein is Large ribosomal subunit protein bL35.